Consider the following 479-residue polypeptide: RHO1 GEF localizing protein 1 (479 aa).

A disordered region spans residues 460 to 479 (SQKDPSRTDPSKLRRVPVIQ).

Its function is as follows. Regulator of RHO1 signaling that acts as a cofactor required for the efficient localization of the TUS1 GTP exchange factor (GEF) for RHO1 to the bud neck during all phases of cytokinesis. RHO1 is a key, essential hub protein in the cell wall integrity (CWI) pathway in which activated RHO1-GTP binds directly to and activates multiple different downstream effectors required for cell wall synthesis and actin assembly during cytokinesis. The chain is RHO1 GEF localizing protein 1 from Saccharomyces cerevisiae (strain ATCC 204508 / S288c) (Baker's yeast).